Consider the following 72-residue polypeptide: uncharacterized protein (72 aa).

The interval 1–53 is disordered; that stretch reads MTNEPSTSTPTSTSTSTSTSTSTSTTTLTSTSSTPTSTSTSTSTSTSTSTSTS.

This is an uncharacterized protein from Dictyostelium discoideum (Social amoeba).